The chain runs to 1400 residues: DNA-directed RNA polymerase subunit beta' (1400 aa).

Positions 70, 72, 85, and 88 each coordinate Zn(2+). 3 residues coordinate Mg(2+): D460, D462, and D464. Residues C814, C889, C896, and C899 each contribute to the Zn(2+) site.

This sequence belongs to the RNA polymerase beta' chain family. As to quaternary structure, the RNAP catalytic core consists of 2 alpha, 1 beta, 1 beta' and 1 omega subunit. When a sigma factor is associated with the core the holoenzyme is formed, which can initiate transcription. Mg(2+) is required as a cofactor. It depends on Zn(2+) as a cofactor.

It carries out the reaction RNA(n) + a ribonucleoside 5'-triphosphate = RNA(n+1) + diphosphate. Functionally, DNA-dependent RNA polymerase catalyzes the transcription of DNA into RNA using the four ribonucleoside triphosphates as substrates. The protein is DNA-directed RNA polymerase subunit beta' of Alcanivorax borkumensis (strain ATCC 700651 / DSM 11573 / NCIMB 13689 / SK2).